The sequence spans 102 residues: Large ribosomal subunit protein bL28 (102 aa).

This sequence belongs to the bacterial ribosomal protein bL28 family.

The polypeptide is Large ribosomal subunit protein bL28 (Bradyrhizobium diazoefficiens (strain JCM 10833 / BCRC 13528 / IAM 13628 / NBRC 14792 / USDA 110)).